The following is a 508-amino-acid chain: 2,3-bisphosphoglycerate-independent phosphoglycerate mutase (508 aa).

Positions 11 and 61 each coordinate Mn(2+). The active-site Phosphoserine intermediate is serine 61. Substrate-binding positions include histidine 122, 150-151 (RD), arginine 182, arginine 188, 257-260 (RPDR), and lysine 332. Aspartate 397, histidine 401, aspartate 438, histidine 439, and histidine 456 together coordinate Mn(2+).

This sequence belongs to the BPG-independent phosphoglycerate mutase family. In terms of assembly, monomer. Requires Mn(2+) as cofactor.

The enzyme catalyses (2R)-2-phosphoglycerate = (2R)-3-phosphoglycerate. It functions in the pathway carbohydrate degradation; glycolysis; pyruvate from D-glyceraldehyde 3-phosphate: step 3/5. Its function is as follows. Catalyzes the interconversion of 2-phosphoglycerate and 3-phosphoglycerate. In Mycoplasma pneumoniae (strain ATCC 29342 / M129 / Subtype 1) (Mycoplasmoides pneumoniae), this protein is 2,3-bisphosphoglycerate-independent phosphoglycerate mutase.